Consider the following 243-residue polypeptide: Small ribosomal subunit protein uS3 (243 aa).

Positions 39–110 (IRTFIEKKYG…QVRINVVEVE (72 aa)) constitute a KH type-2 domain. Residues 216–243 (QTIPVGANPKRKASRRPQQFEDRSNENS) form a disordered region. The span at 233–243 (QQFEDRSNENS) shows a compositional bias: basic and acidic residues.

It belongs to the universal ribosomal protein uS3 family. As to quaternary structure, part of the 30S ribosomal subunit. Forms a tight complex with proteins S10 and S14.

Functionally, binds the lower part of the 30S subunit head. Binds mRNA in the 70S ribosome, positioning it for translation. The polypeptide is Small ribosomal subunit protein uS3 (Prochlorococcus marinus (strain MIT 9215)).